A 761-amino-acid chain; its full sequence is Mitochondrial inner membrane m-AAA protease component YTA10 (761 aa).

The Mitochondrial matrix segment spans residues 1 to 115 (MMMWQRYARG…SLSEYFRSKE (115 aa)). The interval 67–101 (SWTRLNENRPNKEGEGKNNGNKDNNSNKEDGKDKR) is disordered. Basic and acidic residues-rich tracts occupy residues 72-82 (NENRPNKEGEG) and 91-101 (NSNKEDGKDKR). A helical transmembrane segment spans residues 116-136 (FANTMFLTIGFTIIFTLLTPS). At 137 to 223 (SNNSGDDSNR…IPIKYIERSS (87 aa)) the chain is on the mitochondrial intermembrane side. A helical transmembrane segment spans residues 224 to 244 (PFTFLFPFLPTIILLGGLYFI). At 245–761 (TRKINSSPPN…EPPEAPAATN (517 aa)) the chain is on the mitochondrial matrix side. ATP-binding residues include Val290, Ala291, Thr332, Gly333, Lys334, Thr335, Leu336, and His472. Residue His558 coordinates Zn(2+). Glu559 is an active-site residue. Zn(2+) is bound by residues His562 and Asp634.

The protein in the N-terminal section; belongs to the AAA ATPase family. It in the C-terminal section; belongs to the peptidase M41 family. Component of the 850 kDa m-AAA protease complex, a heterohexamer composed of YTA12/RCA1 and YTA10/AFG3. Associates with the prohibitin complex, composed of PHB1 and PHB2, inhibiting the activity of the m-AAA protease complex. Zn(2+) serves as cofactor.

It is found in the mitochondrion inner membrane. It carries out the reaction ATP + H2O = ADP + phosphate + H(+). ATP hydrolysis is coordinated within m-AAA protease ring complexes: ATP-binding to YTA10/AFG3 inhibits ATP hydrolysis by the neighboring subunit YTA12/RCA1, leading to coordinated ATP hydrolysis within the AAA ATPase ring. Functionally, catalytic component of the m-AAA protease, a protease that plays a key role in proteostasis of inner mitochondrial membrane proteins. YTA10/AFG3 possesses both ATPase and protease activities: the ATPase activity is required to unfold substrates, threading them into the internal proteolytic cavity for hydrolysis into small peptide fragments. The complex is necessary for the assembly of mitochondrial respiratory chain and ATPase complexes. The m-AAA protease carries out protein quality control in the inner membrane of the mitochondria by mediating degradation of mistranslated or misfolded polypeptides. It also mediates protein maturation of the mitochondrial ribosomal subunit MRPL32/bL32m by catalyzing the cleavage of the presequence of MRPL32/bL32m prior to assembly into the mitochondrial ribosome. Promotes maturation of cytochrome c peroxidase (CCP1) by acting as a membrane protein dislocase via its ATPase activity: pulls the CCP1 transmembrane to the matrix prior to processing by the rhomboid protease PCP1. The membrane protein dislocase activity is also required to dislocate moderately hydrophobic transmembrane segments from the membrane. This is Mitochondrial inner membrane m-AAA protease component YTA10 from Saccharomyces cerevisiae (strain ATCC 204508 / S288c) (Baker's yeast).